The chain runs to 258 residues: Imidazole glycerol phosphate synthase subunit HisF (258 aa).

Residues Asp-11 and Asp-130 contribute to the active site.

Belongs to the HisA/HisF family. In terms of assembly, heterodimer of HisH and HisF.

Its subcellular location is the cytoplasm. It catalyses the reaction 5-[(5-phospho-1-deoxy-D-ribulos-1-ylimino)methylamino]-1-(5-phospho-beta-D-ribosyl)imidazole-4-carboxamide + L-glutamine = D-erythro-1-(imidazol-4-yl)glycerol 3-phosphate + 5-amino-1-(5-phospho-beta-D-ribosyl)imidazole-4-carboxamide + L-glutamate + H(+). It participates in amino-acid biosynthesis; L-histidine biosynthesis; L-histidine from 5-phospho-alpha-D-ribose 1-diphosphate: step 5/9. IGPS catalyzes the conversion of PRFAR and glutamine to IGP, AICAR and glutamate. The HisF subunit catalyzes the cyclization activity that produces IGP and AICAR from PRFAR using the ammonia provided by the HisH subunit. In Escherichia coli O7:K1 (strain IAI39 / ExPEC), this protein is Imidazole glycerol phosphate synthase subunit HisF.